We begin with the raw amino-acid sequence, 473 residues long: Arginine biosynthesis bifunctional protein ArgJ, mitochondrial (473 aa).

6 residues coordinate substrate: T201, K230, T241, E328, N468, and T473. The Nucleophile role is filled by T241.

The protein belongs to the ArgJ family. As to quaternary structure, heterodimer of an alpha and a beta chain. The alpha and beta chains are autoproteolytically processed from a single precursor protein within the mitochondrion.

The protein localises to the mitochondrion matrix. The catalysed reaction is N(2)-acetyl-L-ornithine + L-glutamate = N-acetyl-L-glutamate + L-ornithine. It catalyses the reaction L-glutamate + acetyl-CoA = N-acetyl-L-glutamate + CoA + H(+). It participates in amino-acid biosynthesis; L-arginine biosynthesis; L-ornithine and N-acetyl-L-glutamate from L-glutamate and N(2)-acetyl-L-ornithine (cyclic): step 1/1. Its pathway is amino-acid biosynthesis; L-arginine biosynthesis; N(2)-acetyl-L-ornithine from L-glutamate: step 1/4. In terms of biological role, catalyzes two activities which are involved in the cyclic version of arginine biosynthesis: the synthesis of acetylglutamate from glutamate and acetyl-CoA, and of ornithine by transacetylation between acetylornithine and glutamate. In Paracoccidioides lutzii (strain ATCC MYA-826 / Pb01) (Paracoccidioides brasiliensis), this protein is Arginine biosynthesis bifunctional protein ArgJ, mitochondrial.